The sequence spans 131 residues: Glycine cleavage system H protein (131 aa).

Residues 24 to 106 form the Lipoyl-binding domain; it reads RAIVGVSDHA…YGEGWIMVIE (83 aa). Lysine 65 carries the N6-lipoyllysine modification.

The protein belongs to the GcvH family. As to quaternary structure, the glycine cleavage system is composed of four proteins: P, T, L and H. The cofactor is (R)-lipoate.

In terms of biological role, the glycine cleavage system catalyzes the degradation of glycine. The H protein shuttles the methylamine group of glycine from the P protein to the T protein. This chain is Glycine cleavage system H protein, found in Xylella fastidiosa (strain Temecula1 / ATCC 700964).